The following is a 677-amino-acid chain: MFSPLIEVENLRREINRHNQLYYVQDNPEISDAQYDTLIRRLKELEEAHPELVTPDSPTQKVGAEPLKAFGIVNHPYPLLSLANAFSDTELEAWYQRVKKLLGNISFQIDCEPKMDGLAVALTYRNGKFATGATRGDGFQGENITRNLRTIHSIPLNAEPNAPPVFEVRGEVYLSKNGFAKLNRERADKGLPLFANPRNAAAGSLRQLDPSVTAERPLDIFIYALGYSEDSLLPDSHWQILDYFSKIGFRINPLNRLVNTMEEAKEYYRQMAANRASLPYEADGVVFKVDSVSLQHRLGDVGREPRWAIAYKFPAEQVMTRLKKIGISVGRTGTLNPFAVLEPVNVGGVVVKQAALHNEDDILRKDIREGDTVIIQRAGEVIPEVVAPVLSKRNPESKPFRMEESLFNPNLNRPACPVCGGEIYRPAGEAMHYCTNVSCPAQFERQLEHFVSRGAMDIRGIGESLSVILAQQGLVKNVSDLYYLTTADLLQLPRMGEKSADNIIDAIADSKTRPLDRVIFGLGVRHVGNETATLLSRHYGNIWALAKTGLGELQTIPDIGDKIASSIVAYFSEEKNVAVIRRLEEAGVRLTSDQKPVNKNMPFSGMEFVVTGKLESFSREEAQEKIRSLGGTAKDNVTKATSYLVVGADAGSKLAKARSMGVKELSEREFINMLEQS.

NAD(+) is bound by residues 32 to 36 (DAQYD), 81 to 82 (SL), and glutamate 112. Lysine 114 acts as the N6-AMP-lysine intermediate in catalysis. NAD(+) contacts are provided by arginine 135, glutamate 171, lysine 288, and lysine 312. Zn(2+) is bound by residues cysteine 416, cysteine 419, cysteine 434, and cysteine 439. The BRCT domain occupies 598-677 (NKNMPFSGME…REFINMLEQS (80 aa)).

Belongs to the NAD-dependent DNA ligase family. LigA subfamily. Mg(2+) serves as cofactor. Requires Mn(2+) as cofactor.

The catalysed reaction is NAD(+) + (deoxyribonucleotide)n-3'-hydroxyl + 5'-phospho-(deoxyribonucleotide)m = (deoxyribonucleotide)n+m + AMP + beta-nicotinamide D-nucleotide.. In terms of biological role, DNA ligase that catalyzes the formation of phosphodiester linkages between 5'-phosphoryl and 3'-hydroxyl groups in double-stranded DNA using NAD as a coenzyme and as the energy source for the reaction. It is essential for DNA replication and repair of damaged DNA. In Dehalococcoides mccartyi (strain CBDB1), this protein is DNA ligase.